We begin with the raw amino-acid sequence, 635 residues long: Allantoin permease (635 aa).

Topologically, residues 1-144 are cytoplasmic; the sequence is MANDALSAIF…AGTGLQLGLN (144 aa). A helical membrane pass occupies residues 145–165; that stretch reads WWQCWLTVWIGYTFAGIFVVL. At 166-174 the chain is on the extracellular side; the sequence is NSRFGSAYH. The helical transmembrane segment at 175–195 threads the bilayer; sequence LSFPITVRASFGIFFSMWPII. The Cytoplasmic portion of the chain corresponds to 196–198; it reads NRV. A helical membrane pass occupies residues 199-219; it reads VMAIVWYAVQAWLGATPVALM. Residues 220–243 are Extracellular-facing; the sequence is LKSIFGKNLEDRIPNHFGSPNSTT. The helical transmembrane segment at 244-264 threads the bilayer; sequence FEFMCFFIFWVVSIPFVLVAP. At 265 to 269 the chain is on the cytoplasmic side; the sequence is HKIRH. A helical transmembrane segment spans residues 270 to 290; that stretch reads LFTVKAALIPFAAFGFLIWAL. The Extracellular segment spans residues 291–311; it reads KKSHGKIELGTLNDYSPHGSE. A helical transmembrane segment spans residues 312–332; the sequence is FSWIFVRSLMACVANFAALII. Over 333 to 351 the chain is Cytoplasmic; sequence NAPDFGRFAKNPQASLWPQ. A helical membrane pass occupies residues 352 to 372; the sequence is LVAIPLFFAITCLIGIIVTAA. Over 373 to 401 the chain is Extracellular; it reads GYHLYGVNYWSPLDVLGQFLETTYTRGTR. A helical transmembrane segment spans residues 402–422; it reads AGVFLISFVFALAQLGTNISA. Over 423 to 443 the chain is Cytoplasmic; it reads NSLACGADMTALFPRYINIRR. The helical transmembrane segment at 444–464 threads the bilayer; it reads GSLFCVAMALCICPWNLMASS. Topologically, residues 465–466 are extracellular; the sequence is SK. A helical membrane pass occupies residues 467–487; the sequence is FTSALGAYAIFLSSIAGVICA. The Cytoplasmic portion of the chain corresponds to 488–522; it reads DYFVVRRGYVKLTHLFLAQKGSFYMFGNKFGANWR. A helical membrane pass occupies residues 523-543; the sequence is AFVAYICGIAPNLPGFIGDVG. Topologically, residues 544 to 560 are extracellular; sequence APKITVSEGAMRLYYLG. Residues 561 to 581 traverse the membrane as a helical segment; it reads YPVGFFISAVIYLILCYFFPV. Topologically, residues 582-635 are cytoplasmic; sequence PGTPVTNFLTEKGWFQRWAYVEDFEQDWKNELRRDDLCDDTVSIYDGTEEKIVY.

This sequence belongs to the purine-cytosine permease (2.A.39) family.

The protein resides in the membrane. In terms of biological role, transport of allantoin. In Saccharomyces cerevisiae (strain ATCC 204508 / S288c) (Baker's yeast), this protein is Allantoin permease (DAL4).